The sequence spans 703 residues: Cycloartenol synthase (703 aa).

PFTB repeat units follow at residues 59–103 (IKKA…QLPE) and 106–148 (QREI…RLLG). The active-site Proton donor is the Asp435. PFTB repeat units lie at residues 461–503 (IADG…QNIM), 539–579 (IARG…VASG), 587–628 (IVKA…VNTG), and 645–686 (IERG…KNIF).

It belongs to the terpene cyclase/mutase family.

It carries out the reaction (S)-2,3-epoxysqualene = cycloartenol. Functionally, converts oxidosqualene to cycloartenol (in vitro). In Dictyostelium discoideum (Social amoeba), this protein is Cycloartenol synthase (cas1).